Reading from the N-terminus, the 339-residue chain is Phosphate acyltransferase (339 aa).

The protein belongs to the PlsX family. In terms of assembly, homodimer. Probably interacts with PlsY.

The protein resides in the cytoplasm. The enzyme catalyses a fatty acyl-[ACP] + phosphate = an acyl phosphate + holo-[ACP]. The protein operates within lipid metabolism; phospholipid metabolism. Functionally, catalyzes the reversible formation of acyl-phosphate (acyl-PO(4)) from acyl-[acyl-carrier-protein] (acyl-ACP). This enzyme utilizes acyl-ACP as fatty acyl donor, but not acyl-CoA. In Clostridium perfringens (strain SM101 / Type A), this protein is Phosphate acyltransferase.